Reading from the N-terminus, the 385-residue chain is MAKHLFTSESVSEGHPDKIADQISDTVLDAILAQDLKARVACETYVKTGMVLVGGEITTNAWIDIEELTRNTIRDIGYTNSEMKFDANSCAVLSIISKQSPDINKGINNIDPREQGAGDQGFMFGYATNETDVLMPAPITYAHRLVARQSLVRKNGTLPWLCPDAKSQVTFAYDEGKVVGIDTVVFSTQHVENITLPNLKEAVMEEIIKPVLPIELLSEHTKFFINPTGRFVVGGPMGDCGLTGRKIIVDTYGGMARHGGGAFSGKDPSKVDRSAAYAARYVAKNIVAAGLAEKCEIQVSYAIGIAEPTSITIETFGTEKISADHLTALVNEFFDLRPYSLITMLNLLQPIYRETATYGHFGREHFPWEKTDKAILLRDAASXIC.

H15 lines the ATP pocket. Position 17 (D17) interacts with Mg(2+). E43 lines the K(+) pocket. The L-methionine site is built by E56 and Q99. Residues Q99–N109 form a flexible loop region. ATP is bound by residues D164–K166, R230–F231, D239, R245–K246, A262, and K266. Position 239 (D239) interacts with L-methionine. Residue K270 participates in L-methionine binding.

Belongs to the AdoMet synthase family. As to quaternary structure, homotetramer; dimer of dimers. The cofactor is Mg(2+). It depends on K(+) as a cofactor.

The protein resides in the cytoplasm. The catalysed reaction is L-methionine + ATP + H2O = S-adenosyl-L-methionine + phosphate + diphosphate. Its pathway is amino-acid biosynthesis; S-adenosyl-L-methionine biosynthesis; S-adenosyl-L-methionine from L-methionine: step 1/1. Catalyzes the formation of S-adenosylmethionine (AdoMet) from methionine and ATP. The overall synthetic reaction is composed of two sequential steps, AdoMet formation and the subsequent tripolyphosphate hydrolysis which occurs prior to release of AdoMet from the enzyme. The protein is S-adenosylmethionine synthase of Baumannia cicadellinicola subsp. Homalodisca coagulata.